Consider the following 93-residue polypeptide: SH3 domain-binding glutamic acid-rich-like protein 3 (93 aa).

Ser-2 bears the N-acetylserine mark. The region spanning 2-93 is the Glutaredoxin domain; sequence SGLRVYSTSV…NTLQEFLKLA (92 aa). Thr-9 is a glycosylation site (O-linked (GalNAc...) threonine).

This sequence belongs to the SH3BGR family. Interacts with MYO1C (via its IQ motifs); the interaction is dependent on calcium and takes place at membrane ruffles. Post-translationally, may be glycosylated. As to expression, expressed in heart, liver, lung, kidney, spleen, thymus, ovarian follicles, skeletal muscle, brain, lymph node and mammary epithelial and stromal cells (at protein level).

Its subcellular location is the cytoplasm. The protein resides in the cytosol. The protein localises to the cell projection. It localises to the ruffle membrane. It is found in the nucleus. Its function is as follows. Could act as a modulator of glutaredoxin biological activity. May play a role in cytoskeleton organization. This is SH3 domain-binding glutamic acid-rich-like protein 3 from Rattus norvegicus (Rat).